The sequence spans 285 residues: Pantothenate synthetase (285 aa).

Position 30 to 37 (30 to 37 (MGYLHAGH)) interacts with ATP. His-37 (proton donor) is an active-site residue. Position 61 (Gln-61) interacts with (R)-pantoate. Gln-61 is a binding site for beta-alanine. Position 147–150 (147–150 (GQKD)) interacts with ATP. Gln-153 is a binding site for (R)-pantoate. Residues Val-176 and 184–187 (LSSR) each bind ATP.

The protein belongs to the pantothenate synthetase family. In terms of assembly, homodimer.

It localises to the cytoplasm. The enzyme catalyses (R)-pantoate + beta-alanine + ATP = (R)-pantothenate + AMP + diphosphate + H(+). It functions in the pathway cofactor biosynthesis; (R)-pantothenate biosynthesis; (R)-pantothenate from (R)-pantoate and beta-alanine: step 1/1. Catalyzes the condensation of pantoate with beta-alanine in an ATP-dependent reaction via a pantoyl-adenylate intermediate. The chain is Pantothenate synthetase from Solidesulfovibrio magneticus (strain ATCC 700980 / DSM 13731 / RS-1) (Desulfovibrio magneticus).